The chain runs to 602 residues: Zinc finger protein 652-B (602 aa).

The disordered stretch occupies residues 60–232; that stretch reads FQDSKPTNEV…PSDKAKSEEK (173 aa). Over residues 65-79 the composition is skewed to basic and acidic residues; it reads PTNEVHAVKGERENS. 2 stretches are compositionally biased toward acidic residues: residues 80–108 and 148–167; these read GESE…DEDE and DDEG…DEEN. Residues 222 to 232 are compositionally biased toward basic and acidic residues; it reads SPSDKAKSEEK. The segment at 235 to 258 adopts a C2H2-type 1 zinc-finger fold; sequence LTCDKCPRVFNTRWYLEKHMNVTH. Residues 262-284 form a C2H2-type 2; degenerate zinc finger; the sequence is QICDKCGKKFVLESELSLHLQTD. C2H2-type zinc fingers lie at residues 289 to 312, 319 to 341, 347 to 369, 375 to 397, 403 to 425, and 431 to 453; these read IQCI…KIVH, FSCE…LVAH, FTCE…SLQH, FRCE…MSIH, FMCQ…MKTH, and FICE…RRTH. Residues 459–482 form a C2H2-type 9; degenerate zinc finger; that stretch reads YPCDVCGMRFRFSNMLKAHKEKCF. Positions 543–575 are disordered; that stretch reads PFSHLHLHPHSHTHHLAVPPVPHLPPPPALFKS. The span at 545–557 shows a compositional bias: basic residues; the sequence is SHLHLHPHSHTHH. Over residues 561-571 the composition is skewed to pro residues; it reads PPVPHLPPPPA.

This sequence belongs to the krueppel C2H2-type zinc-finger protein family.

It localises to the nucleus. May be involved in transcriptional regulation. The sequence is that of Zinc finger protein 652-B (znf652-b) from Xenopus laevis (African clawed frog).